Here is a 266-residue protein sequence, read N- to C-terminus: MAVVGVPGWIGSSSVNETGQRWMSQAAGQLRLGVPCWMSQFAGRSREIIHTLGADHNFNGQWFRDRCFEAGSAPIVFNITGDLVSYSKDVPLFFMYGDTPNEYVVLNIHGGVHMWGRGGNGGYTHSGGDGNGTQGGHVIQNDIGGRLRIWNYGVIAAGGGGGGGIAYRPHSGAKWQDIGGGGGRPFGGAGGGRYSGGAASYEGPGGGYDYGNAHSGAGGNAGAAGQNAWSDGGKVLKVGVGGASGHAVFGSSPTWGVVGTIYGPRV.

10 short sequence motifs (GRM) span residues 116 to 123 (GRGGNGGY), 126 to 137 (SGGDGNGTQGGH), 157 to 171 (AGGG…RPHS), 174 to 184 (KWQDIGGGGGR), 187 to 191 (GGAGG), 194 to 200 (YSGGAAS), 202 to 209 (EGPGGGYD), 214 to 220 (HSGAGGN), 223 to 228 (AAGQNA), and 232 to 246 (GGKV…ASGH).

The protein belongs to the receptor-recognizing protein gp38 family.

It is found in the virion. Its function is as follows. Receptor binding protein (RBP) that is at the tip of the long tail fibers and serves as the phage recognition site for the attachment host receptor. Probably uses the host receptor OmpA. This is Receptor-recognizing protein gp38 (38) from Enterobacteria phage Ox2 (Bacteriophage Ox2).